We begin with the raw amino-acid sequence, 82 residues long: MNPIVSAASVVASGLSVGLAAIGPGIGQGTAAAQAVEGIARQPEAEGRIRGTLLLSLAFMESLTIYGLVVALALLFANPFTS.

2 helical membrane passes run Ala7–Gly27 and Leu57–Ala77.

Belongs to the ATPase C chain family. F-type ATPases have 2 components, F(1) - the catalytic core - and F(0) - the membrane proton channel. F(1) has five subunits: alpha(3), beta(3), gamma(1), delta(1), epsilon(1). F(0) has four main subunits: a(1), b(1), b'(1) and c(10-14). The alpha and beta chains form an alternating ring which encloses part of the gamma chain. F(1) is attached to F(0) by a central stalk formed by the gamma and epsilon chains, while a peripheral stalk is formed by the delta, b and b' chains.

The protein localises to the plastid. It localises to the chloroplast thylakoid membrane. F(1)F(0) ATP synthase produces ATP from ADP in the presence of a proton or sodium gradient. F-type ATPases consist of two structural domains, F(1) containing the extramembraneous catalytic core and F(0) containing the membrane proton channel, linked together by a central stalk and a peripheral stalk. During catalysis, ATP synthesis in the catalytic domain of F(1) is coupled via a rotary mechanism of the central stalk subunits to proton translocation. In terms of biological role, key component of the F(0) channel; it plays a direct role in translocation across the membrane. A homomeric c-ring of between 10-14 subunits forms the central stalk rotor element with the F(1) delta and epsilon subunits. The sequence is that of ATP synthase subunit c, chloroplastic from Guillardia theta (Cryptophyte).